The primary structure comprises 1288 residues: Mitogen-activated protein kinase kinase kinase 6 (1288 aa).

A Protein kinase domain is found at 648 to 906; sequence TGERLVLGKG…AQTLLGDPFL (259 aa). Residues 654 to 662 and Lys677 each bind ATP; that span reads LGKGTYGVV. Asp771 (proton acceptor) is an active-site residue. Thr806 is modified (phosphothreonine). The disordered stretch occupies residues 899-997; it reads TLLGDPFLQP…SSGLSLLHQE (99 aa). Low complexity predominate over residues 914 to 952; it reads SPSSPRHAPRPSDAPSASPTPSANSTTQSQTFPCPQAPS. Phosphoserine is present on residues Ser964 and Ser984. The segment covering 980–989 has biased composition (low complexity); that stretch reads EEPASPEESS. Residues 1004-1029 adopt a coiled-coil conformation; it reads LAAVLEQELPALAENLHQEQKQEQGA. The segment covering 1123-1134 has biased composition (basic and acidic residues); sequence VEKEAVSPRSEE. The interval 1123–1157 is disordered; it reads VEKEAVSPRSEELSNEGDSQQSPGQQSPLPVEPEQ. 2 positions are modified to phosphoserine: Ser1129 and Ser1149. Over residues 1141-1151 the composition is skewed to low complexity; sequence SQQSPGQQSPL. Residues 1166–1205 are a coiled coil; sequence LSLLRAETDRLREILAGKEREYQALVQRALQRLNEEARTY.

The protein belongs to the protein kinase superfamily. STE Ser/Thr protein kinase family. MAP kinase kinase kinase subfamily. As to quaternary structure, binds both upstream activators and downstream substrates in multimolecular complexes. Mg(2+) is required as a cofactor.

It catalyses the reaction L-seryl-[protein] + ATP = O-phospho-L-seryl-[protein] + ADP + H(+). The catalysed reaction is L-threonyl-[protein] + ATP = O-phospho-L-threonyl-[protein] + ADP + H(+). Its activity is regulated as follows. Activated by phosphorylation on Thr-806. Catalytically active only when complexed with MAP3K5, with MAP3K5 supporting the stability and the active configuration of MAP3K6 and MAP3K6 activating MAP3K5 by direct phosphorylation. In terms of biological role, component of a protein kinase signal transduction cascade. Activates the JNK, but not ERK or p38 kinase pathways. This chain is Mitogen-activated protein kinase kinase kinase 6 (MAP3K6), found in Homo sapiens (Human).